A 312-amino-acid chain; its full sequence is tRNA uridine(34) hydroxylase (312 aa).

Positions 124–218 constitute a Rhodanese domain; that stretch reads SDPEVLLIDT…YLEEVPEQES (95 aa). The Cysteine persulfide intermediate role is filled by Cys178. The tract at residues 293 to 312 is disordered; that stretch reads AKARNQPHPIGRNYRLPSEA.

The protein belongs to the TrhO family.

It carries out the reaction uridine(34) in tRNA + AH2 + O2 = 5-hydroxyuridine(34) in tRNA + A + H2O. Functionally, catalyzes oxygen-dependent 5-hydroxyuridine (ho5U) modification at position 34 in tRNAs. This is tRNA uridine(34) hydroxylase from Pseudomonas syringae pv. syringae (strain B728a).